Consider the following 290-residue polypeptide: ATP synthase gamma chain (290 aa).

Belongs to the ATPase gamma chain family. As to quaternary structure, F-type ATPases have 2 components, CF(1) - the catalytic core - and CF(0) - the membrane proton channel. CF(1) has five subunits: alpha(3), beta(3), gamma(1), delta(1), epsilon(1). CF(0) has three main subunits: a, b and c.

It is found in the cell inner membrane. In terms of biological role, produces ATP from ADP in the presence of a proton gradient across the membrane. The gamma chain is believed to be important in regulating ATPase activity and the flow of protons through the CF(0) complex. The polypeptide is ATP synthase gamma chain (Anaeromyxobacter dehalogenans (strain 2CP-1 / ATCC BAA-258)).